The following is a 183-amino-acid chain: Orotate phosphoribosyltransferase (183 aa).

5-phospho-alpha-D-ribose 1-diphosphate is bound by residues Arg-100, Lys-101, Lys-104, His-106, and 126 to 134 (EDVVTTGSS). Thr-130 and Arg-158 together coordinate orotate.

It belongs to the purine/pyrimidine phosphoribosyltransferase family. PyrE subfamily. In terms of assembly, homodimer. It depends on Mg(2+) as a cofactor.

It carries out the reaction orotidine 5'-phosphate + diphosphate = orotate + 5-phospho-alpha-D-ribose 1-diphosphate. Its pathway is pyrimidine metabolism; UMP biosynthesis via de novo pathway; UMP from orotate: step 1/2. Its function is as follows. Catalyzes the transfer of a ribosyl phosphate group from 5-phosphoribose 1-diphosphate to orotate, leading to the formation of orotidine monophosphate (OMP). This chain is Orotate phosphoribosyltransferase, found in Aquifex aeolicus (strain VF5).